Here is a 120-residue protein sequence, read N- to C-terminus: Large ribosomal subunit protein uL24 (120 aa).

The interval 1 to 26 (MSKQPDKQRKSQRRAPLHERHKQVRA) is disordered. Positions 10-24 (KSQRRAPLHERHKQV) are enriched in basic residues.

It belongs to the universal ribosomal protein uL24 family. Part of the 50S ribosomal subunit. Interacts weakly with protein L4.

In terms of biological role, one of two assembly initiator proteins, it binds directly to the 5'-end of the 23S rRNA, where it nucleates assembly of the 50S subunit. Its function is as follows. Stabilizes the tertiary rRNA structure within the 23S rRNA domain (domain I) to which it binds. Located at the polypeptide exit tunnel on the outside of the subunit. This Haloarcula marismortui (strain ATCC 43049 / DSM 3752 / JCM 8966 / VKM B-1809) (Halobacterium marismortui) protein is Large ribosomal subunit protein uL24 (rpl24).